The chain runs to 121 residues: Small ribosomal subunit protein uS12c (121 aa).

This sequence belongs to the universal ribosomal protein uS12 family. As to quaternary structure, part of the 30S ribosomal subunit.

The protein localises to the plastid. It is found in the chloroplast. Functionally, with S4 and S5 plays an important role in translational accuracy. Located at the interface of the 30S and 50S subunits. The protein is Small ribosomal subunit protein uS12c (rps12) of Bigelowiella natans (Pedinomonas minutissima).